Consider the following 264-residue polypeptide: Glutamate 5-kinase (264 aa).

Lys9 is a binding site for ATP. Ser47, Asp132, and Asn144 together coordinate substrate. ATP contacts are provided by residues 164 to 165 and 206 to 212; these read SD and TGGIVTK.

This sequence belongs to the glutamate 5-kinase family.

The protein localises to the cytoplasm. The catalysed reaction is L-glutamate + ATP = L-glutamyl 5-phosphate + ADP. Its pathway is amino-acid biosynthesis; L-proline biosynthesis; L-glutamate 5-semialdehyde from L-glutamate: step 1/2. In terms of biological role, catalyzes the transfer of a phosphate group to glutamate to form L-glutamate 5-phosphate. The chain is Glutamate 5-kinase from Helicobacter hepaticus (strain ATCC 51449 / 3B1).